The chain runs to 502 residues: Inosine-5'-monophosphate dehydrogenase 2 (502 aa).

Position 2 is an N-acetylserine (Ser-2). The CBS domain occupies 166-225; that stretch reads MKSCENKDYYVPWDIDLDKIEAVLEDKQKGFVVLEKEGETVNVVTKDDVERVKGYPKLGS. NAD(+) contacts are provided by residues 264-266 and 314-316; these read DSS and GMG. K(+) is bound by residues Gly-316 and Gly-318. Residue Ser-319 participates in IMP binding. K(+) is bound at residue Cys-321. Cys-321 serves as the catalytic Thioimidate intermediate. Residues 354 to 356, 377 to 378, and 401 to 405 contribute to the IMP site; these read DGG, GS, and YRGMG. Arg-417 acts as the Proton acceptor in catalysis. Gln-429 is a binding site for IMP. Residues Glu-488, Gly-489, and Gly-490 each contribute to the K(+) site.

The protein belongs to the IMPDH/GMPR family. As to quaternary structure, homotetramer. The cofactor is K(+).

It is found in the cytoplasm. It carries out the reaction IMP + NAD(+) + H2O = XMP + NADH + H(+). Its pathway is purine metabolism; XMP biosynthesis via de novo pathway; XMP from IMP: step 1/1. Mycophenolic acid (MPA) is a non-competitive inhibitor that prevents formation of the closed enzyme conformation by binding to the same site as the amobile flap. In contrast, mizoribine monophosphate (MZP) is a competitive inhibitor that induces the closed conformation. MPA is a potent inhibitor of mammalian IMPDHs but a poor inhibitor of the bacterial enzymes. MZP is a more potent inhibitor of bacterial IMPDH. Functionally, catalyzes the conversion of inosine 5'-phosphate (IMP) to xanthosine 5'-phosphate (XMP), the first committed and rate-limiting step in the de novo synthesis of guanine nucleotides, and therefore plays an important role in the regulation of cell growth. This is Inosine-5'-monophosphate dehydrogenase 2 from Arabidopsis thaliana (Mouse-ear cress).